The sequence spans 914 residues: Beta-mannosidase A (914 aa).

Positions 1-20 (MRFTATAAALVASSIPATLG) are cleaved as a signal peptide. 7 N-linked (GlcNAc...) asparagine glycosylation sites follow: Asn-39, Asn-79, Asn-230, Asn-265, Asn-299, Asn-309, and Asn-330. Glu-462 (proton donor) is an active-site residue. N-linked (GlcNAc...) asparagine glycosylation is found at Asn-591, Asn-614, Asn-641, Asn-721, Asn-744, Asn-773, Asn-784, and Asn-909.

Belongs to the glycosyl hydrolase 2 family. Beta-mannosidase A subfamily. As to quaternary structure, homodimer.

It is found in the secreted. The enzyme catalyses Hydrolysis of terminal, non-reducing beta-D-mannose residues in beta-D-mannosides.. It functions in the pathway glycan metabolism; N-glycan degradation. Functionally, exoglycosidase that cleaves the single beta-linked mannose residue from the non-reducing end of beta-mannosidic oligosaccharides of various complexity and length. Involved in the degradation of polymeric mannan and galactomannan. The chain is Beta-mannosidase A (mndA) from Aspergillus oryzae (strain ATCC 42149 / RIB 40) (Yellow koji mold).